The primary structure comprises 310 residues: uncharacterized protein (310 aa).

The stretch at 269–307 (DLAELERKKSLAEIHKKAAMAKKREEKKKIKQELKKSAK) forms a coiled coil. Basic and acidic residues predominate over residues 290–304 (KKREEKKKIKQELKK). The segment at 290 to 310 (KKREEKKKIKQELKKSAKGKK) is disordered.

This is an uncharacterized protein from Magallana gigas (Pacific oyster).